Here is a 181-residue protein sequence, read N- to C-terminus: MFQMENRNDELFIKLDSSIKSLLRSAREFKKENESISNVLLQLAEMLDNIDKTLEIIEKNFQIILKNRESGKFSNNEIIQKFVKPLENLIKVIENIESTSNNLKNEIENCASSIPTLKEITDKLKIINMESATQAIEEFKIAYDMLEDNRKNLDELIEKTKILKDKLKNLLLQIDNFLNEH.

This is an uncharacterized protein from Methanocaldococcus jannaschii (strain ATCC 43067 / DSM 2661 / JAL-1 / JCM 10045 / NBRC 100440) (Methanococcus jannaschii).